The chain runs to 613 residues: Metacaspase-1 (613 aa).

Residues histidine 404 and cysteine 460 contribute to the active site.

Belongs to the peptidase C14B family. As to quaternary structure, monomer.

Its activity is regulated as follows. Activated by Ca(2+). Functionally, cysteine protease that cleaves specifically after arginine or lysine residues. May play a role in apoptosis. This is Metacaspase-1 from Plasmodium falciparum (isolate 3D7).